Reading from the N-terminus, the 98-residue chain is NADH-ubiquinone oxidoreductase chain 4L (98 aa).

A run of 3 helical transmembrane segments spans residues 1–21 (MSLT…GLLL), 29–49 (SLLC…MVIL), and 61–81 (IILL…LVMV).

The protein belongs to the complex I subunit 4L family. Core subunit of respiratory chain NADH dehydrogenase (Complex I) which is composed of 45 different subunits.

It is found in the mitochondrion inner membrane. It catalyses the reaction a ubiquinone + NADH + 5 H(+)(in) = a ubiquinol + NAD(+) + 4 H(+)(out). In terms of biological role, core subunit of the mitochondrial membrane respiratory chain NADH dehydrogenase (Complex I) which catalyzes electron transfer from NADH through the respiratory chain, using ubiquinone as an electron acceptor. Part of the enzyme membrane arm which is embedded in the lipid bilayer and involved in proton translocation. In Platyrrhinus helleri (Heller's broad-nosed bat), this protein is NADH-ubiquinone oxidoreductase chain 4L (MT-ND4L).